We begin with the raw amino-acid sequence, 335 residues long: 5-formaminoimidazole-4-carboxamide-1-(beta)-D-ribofuranosyl 5'-monophosphate synthetase (335 aa).

Residues histidine 21 and serine 86 each contribute to the 5-amino-1-(5-phospho-beta-D-ribosyl)imidazole-4-carboxamide site. The ATP-grasp domain maps to 107-315; that stretch reads RELLRWEADQ…YFDKPMDMGE (209 aa). ATP contacts are provided by residues 137 to 189 and glutamate 211; that span reads PTEV…VPAY. Asparagine 231 is a binding site for 5-amino-1-(5-phospho-beta-D-ribosyl)imidazole-4-carboxamide. The Mg(2+) site is built by glutamate 270 and glutamate 283.

It belongs to the phosphohexose mutase family. Requires Mg(2+) as cofactor. Mn(2+) serves as cofactor.

It carries out the reaction 5-amino-1-(5-phospho-beta-D-ribosyl)imidazole-4-carboxamide + formate + ATP = 5-formamido-1-(5-phospho-D-ribosyl)imidazole-4-carboxamide + ADP + phosphate. The protein operates within purine metabolism; IMP biosynthesis via de novo pathway; 5-formamido-1-(5-phospho-D-ribosyl)imidazole-4-carboxamide from 5-amino-1-(5-phospho-D-ribosyl)imidazole-4-carboxamide (formate route): step 1/1. Catalyzes the ATP- and formate-dependent formylation of 5-aminoimidazole-4-carboxamide-1-beta-d-ribofuranosyl 5'-monophosphate (AICAR) to 5-formaminoimidazole-4-carboxamide-1-beta-d-ribofuranosyl 5'-monophosphate (FAICAR) in the absence of folates. The polypeptide is 5-formaminoimidazole-4-carboxamide-1-(beta)-D-ribofuranosyl 5'-monophosphate synthetase (Pyrobaculum arsenaticum (strain DSM 13514 / JCM 11321 / PZ6)).